Here is a 29-residue protein sequence, read N- to C-terminus: Kalata-B4 (29 aa).

A cross-link (cyclopeptide (Gly-Asp)) is located at residues 1 to 29; the sequence is GLPVCGETCVGGTCNTPGCTCSWPVCTRD. 3 cysteine pairs are disulfide-bonded: Cys5-Cys19, Cys9-Cys21, and Cys14-Cys26.

In terms of processing, this is a cyclic peptide.

Probably participates in a plant defense mechanism. The sequence is that of Kalata-B4 from Oldenlandia affinis.